Reading from the N-terminus, the 78-residue chain is MSEVVVKEQLEQYISKIERLEQEKADLSQEVKDIFQDASAHGFDVKAMKSILKLKKLDKDKLAEQDAMLELYRDTLGI.

This sequence belongs to the UPF0335 family.

This is UPF0335 protein A1C_00850 from Rickettsia akari (strain Hartford).